A 77-amino-acid polypeptide reads, in one-letter code: Major pilus subunit operon regulatory protein (77 aa).

It to E.coli AfaF and DaaF.

In terms of biological role, plays a role in the inhibition of methylation at the GATC1028 site located in the regulatory region upstream of the pabA promoter. May, in conjunction with the Mbf (methylation blocking factor), inhibits deoxyadenosine methylase from methylating the GATC1028 site. The polypeptide is Major pilus subunit operon regulatory protein (papI) (Escherichia coli).